Consider the following 118-residue polypeptide: MISKPDKNKIRQKRHRRVRGKLSGTADRPRLNVFRSNTGIYAQVIDDVAGVTLASASTLDKEVSKGTKTEQAVVVGKLVAERAVAKGISEVVFDRGGYLYHGRVKALADAARENGLKF.

The disordered stretch occupies residues 1-26; it reads MISKPDKNKIRQKRHRRVRGKLSGTA. The segment covering 10–20 has biased composition (basic residues); it reads IRQKRHRRVRG.

Belongs to the universal ribosomal protein uL18 family. In terms of assembly, part of the 50S ribosomal subunit; part of the 5S rRNA/L5/L18/L25 subcomplex. Contacts the 5S and 23S rRNAs.

In terms of biological role, this is one of the proteins that bind and probably mediate the attachment of the 5S RNA into the large ribosomal subunit, where it forms part of the central protuberance. This is Large ribosomal subunit protein uL18 from Streptococcus equi subsp. zooepidemicus (strain H70).